The primary structure comprises 385 residues: 1-deoxy-D-xylulose 5-phosphate reductoisomerase (385 aa).

Residues Thr-13, Gly-14, Ser-15, Ile-16, Asn-40, and Asn-122 each contribute to the NADPH site. Lys-123 contributes to the 1-deoxy-D-xylulose 5-phosphate binding site. Glu-124 lines the NADPH pocket. Position 148 (Asp-148) interacts with Mn(2+). 1-deoxy-D-xylulose 5-phosphate is bound by residues Ser-149, Glu-150, Ser-177, and His-200. A Mn(2+)-binding site is contributed by Glu-150. Residue Gly-206 coordinates NADPH. Residues Ser-213, Asn-218, Lys-219, and Glu-222 each coordinate 1-deoxy-D-xylulose 5-phosphate. Residue Glu-222 participates in Mn(2+) binding.

It belongs to the DXR family. It depends on Mg(2+) as a cofactor. The cofactor is Mn(2+).

The catalysed reaction is 2-C-methyl-D-erythritol 4-phosphate + NADP(+) = 1-deoxy-D-xylulose 5-phosphate + NADPH + H(+). It participates in isoprenoid biosynthesis; isopentenyl diphosphate biosynthesis via DXP pathway; isopentenyl diphosphate from 1-deoxy-D-xylulose 5-phosphate: step 1/6. In terms of biological role, catalyzes the NADPH-dependent rearrangement and reduction of 1-deoxy-D-xylulose-5-phosphate (DXP) to 2-C-methyl-D-erythritol 4-phosphate (MEP). In Francisella tularensis subsp. novicida (strain U112), this protein is 1-deoxy-D-xylulose 5-phosphate reductoisomerase.